Consider the following 299-residue polypeptide: Cycloserine biosynthesis protein DcsG (299 aa).

Positions 92, 137, 144, 175, 176, and 178 each coordinate ATP. Residues Leu-95–Lys-298 enclose the ATP-grasp domain. Residues Arg-220 and Arg-254 contribute to the active site. Mg(2+) contacts are provided by Glu-269 and Glu-271. Glu-271 is an active-site residue.

As to quaternary structure, monomer. Requires Mg(2+) as cofactor.

The catalysed reaction is O-ureido-D-serine + ATP + H2O + H(+) = D-cycloserine + NH4(+) + ADP + phosphate + CO2. Its function is as follows. Involved in the biosynthesis of the antibiotic D-cycloserine (DCS), a cyclic structural analog of D-alanine, used as an antitubercular agent. Catalyzes the synthesis of D-cycloserine from O-ureido-D-serine (D-OUS). It reacts with D-OUS, D-homocysteine and beta-aminooxy-D-alanine. The protein is Cycloserine biosynthesis protein DcsG of Streptomyces lavendulae.